We begin with the raw amino-acid sequence, 152 residues long: MKTPIELKILDSRIGTQFPLPAYATLGSAGMDLRAITDIALTIQPGETVLIPTGIAVHVADPSLAAIILPRSGLGHKHGIVLGNLVGLIDSDYQGPLMVSCWNRGSEPFTIEIGDRLAQLVFVPVVQAEFKLVDEFDSSDRGAGGFGHSGTK.

Residues 71–73, Asn84, 88–90, and Met98 each bind substrate; these read RSG and LID.

Belongs to the dUTPase family. It depends on Mg(2+) as a cofactor.

The catalysed reaction is dUTP + H2O = dUMP + diphosphate + H(+). It participates in pyrimidine metabolism; dUMP biosynthesis; dUMP from dCTP (dUTP route): step 2/2. This enzyme is involved in nucleotide metabolism: it produces dUMP, the immediate precursor of thymidine nucleotides and it decreases the intracellular concentration of dUTP so that uracil cannot be incorporated into DNA. The chain is Deoxyuridine 5'-triphosphate nucleotidohydrolase from Shewanella piezotolerans (strain WP3 / JCM 13877).